Reading from the N-terminus, the 290-residue chain is UPF0046 protein K07C11.7 (290 aa).

An N-terminal signal peptide occupies residues 1 to 22; the sequence is MFHFSIGTVLISICWLAQWMEA. Asn-204 carries an N-linked (GlcNAc...) asparagine glycan.

The protein belongs to the UPF0046 family.

This Caenorhabditis elegans protein is UPF0046 protein K07C11.7.